Consider the following 533-residue polypeptide: 2-isopropylmalate synthase (533 aa).

Positions I8–A269 constitute a Pyruvate carboxyltransferase domain. Mn(2+) is bound by residues D17, H208, H210, and N244. The interval R408–L533 is regulatory domain.

The protein belongs to the alpha-IPM synthase/homocitrate synthase family. LeuA type 1 subfamily. Homodimer. Mn(2+) is required as a cofactor.

Its subcellular location is the cytoplasm. The enzyme catalyses 3-methyl-2-oxobutanoate + acetyl-CoA + H2O = (2S)-2-isopropylmalate + CoA + H(+). The protein operates within amino-acid biosynthesis; L-leucine biosynthesis; L-leucine from 3-methyl-2-oxobutanoate: step 1/4. Its function is as follows. Catalyzes the condensation of the acetyl group of acetyl-CoA with 3-methyl-2-oxobutanoate (2-ketoisovalerate) to form 3-carboxy-3-hydroxy-4-methylpentanoate (2-isopropylmalate). The sequence is that of 2-isopropylmalate synthase from Picosynechococcus sp. (strain ATCC 27264 / PCC 7002 / PR-6) (Agmenellum quadruplicatum).